We begin with the raw amino-acid sequence, 421 residues long: Glutamyl-tRNA reductase (421 aa).

Substrate is bound by residues 49–52 (TCNR), Ser-109, 114–116 (EPQ), and Gln-120. Cys-50 serves as the catalytic Nucleophile. Position 189–194 (189–194 (GAGKMS)) interacts with NADP(+).

The protein belongs to the glutamyl-tRNA reductase family. As to quaternary structure, homodimer.

It catalyses the reaction (S)-4-amino-5-oxopentanoate + tRNA(Glu) + NADP(+) = L-glutamyl-tRNA(Glu) + NADPH + H(+). It participates in porphyrin-containing compound metabolism; protoporphyrin-IX biosynthesis; 5-aminolevulinate from L-glutamyl-tRNA(Glu): step 1/2. Catalyzes the NADPH-dependent reduction of glutamyl-tRNA(Glu) to glutamate 1-semialdehyde (GSA). This is Glutamyl-tRNA reductase from Solibacter usitatus (strain Ellin6076).